We begin with the raw amino-acid sequence, 231 residues long: Putative S-adenosylmethionine-dependent methyltransferase RcsF (231 aa).

The 138-residue stretch at 5-142 (VSPIGYIRSC…YVPYADAVAD (138 aa)) folds into the TsaA-like domain. Residues 22–24 (PRQ), 63–64 (HQ), Arg91, and 122–125 (LDGT) each bind S-adenosyl-L-methionine.

This sequence belongs to the tRNA methyltransferase O family.

In Pseudomonas aeruginosa (strain ATCC 15692 / DSM 22644 / CIP 104116 / JCM 14847 / LMG 12228 / 1C / PRS 101 / PAO1), this protein is Putative S-adenosylmethionine-dependent methyltransferase RcsF (rcsF).